The following is a 216-amino-acid chain: 3-isopropylmalate dehydratase small subunit (216 aa).

This sequence belongs to the LeuD family. LeuD type 1 subfamily. Heterodimer of LeuC and LeuD.

It catalyses the reaction (2R,3S)-3-isopropylmalate = (2S)-2-isopropylmalate. The protein operates within amino-acid biosynthesis; L-leucine biosynthesis; L-leucine from 3-methyl-2-oxobutanoate: step 2/4. Its function is as follows. Catalyzes the isomerization between 2-isopropylmalate and 3-isopropylmalate, via the formation of 2-isopropylmaleate. This is 3-isopropylmalate dehydratase small subunit from Marinomonas sp. (strain MWYL1).